Reading from the N-terminus, the 161-residue chain is UPF0225 protein GSU1048 (161 aa).

It belongs to the UPF0225 family.

This Geobacter sulfurreducens (strain ATCC 51573 / DSM 12127 / PCA) protein is UPF0225 protein GSU1048.